The sequence spans 128 residues: Flagellar assembly factor FliW (128 aa).

It belongs to the FliW family. Interacts with translational regulator CsrA and flagellin(s).

The protein localises to the cytoplasm. Its function is as follows. Acts as an anti-CsrA protein, binds CsrA and prevents it from repressing translation of its target genes, one of which is flagellin. Binds to flagellin and participates in the assembly of the flagellum. This chain is Flagellar assembly factor FliW, found in Campylobacter fetus subsp. fetus (strain 82-40).